A 379-amino-acid polypeptide reads, in one-letter code: Succinyl-diaminopimelate desuccinylase (379 aa).

Residue His70 participates in Zn(2+) binding. The active site involves Asp72. Asp103 contributes to the Zn(2+) binding site. The active-site Proton acceptor is Glu137. Glu138, Glu166, and His352 together coordinate Zn(2+).

It belongs to the peptidase M20A family. DapE subfamily. In terms of assembly, homodimer. It depends on Zn(2+) as a cofactor. Co(2+) is required as a cofactor.

It catalyses the reaction N-succinyl-(2S,6S)-2,6-diaminopimelate + H2O = (2S,6S)-2,6-diaminopimelate + succinate. It functions in the pathway amino-acid biosynthesis; L-lysine biosynthesis via DAP pathway; LL-2,6-diaminopimelate from (S)-tetrahydrodipicolinate (succinylase route): step 3/3. In terms of biological role, catalyzes the hydrolysis of N-succinyl-L,L-diaminopimelic acid (SDAP), forming succinate and LL-2,6-diaminopimelate (DAP), an intermediate involved in the bacterial biosynthesis of lysine and meso-diaminopimelic acid, an essential component of bacterial cell walls. The polypeptide is Succinyl-diaminopimelate desuccinylase (Burkholderia pseudomallei (strain 1106a)).